Here is a 545-residue protein sequence, read N- to C-terminus: Cryptochrome-1 (545 aa).

A Photolyase/cryptochrome alpha/beta domain is found at 3 to 140 (INNILWFRHG…RCVENVSHTL (138 aa)). FAD contacts are provided by residues Arg237, Ser265, Ser267, Gln308, His375, 407–409 (DAD), Cys413, and Asn416.

This sequence belongs to the DNA photolyase class-1 family. As to quaternary structure, interacts with tim and per; promoted by light conditions. The cofactor is FAD.

Its subcellular location is the cytoplasm. It localises to the perinuclear region. The protein resides in the nucleus. Its function is as follows. Blue light-dependent regulator that is the input of the circadian feedback loop. Has no photolyase activity for cyclobutane pyrimidine dimers or 6-4 photoproducts. Regulation of expression by light suggests a role in photoreception for locomotor activity rhythms. Functions, together with per, as a transcriptional repressor required for the oscillation of peripheral circadian clocks and for the correct specification of clock cells. Genes directly activated by the transcription factors Clock (Clk) and cycle (cyc) are repressed by cry. This chain is Cryptochrome-1, found in Anopheles gambiae (African malaria mosquito).